A 703-amino-acid chain; its full sequence is Phosphate acetyltransferase (703 aa).

The phosphate acetyltransferase stretch occupies residues 377–703 (AFRYELIQKA…IQATQAREGA (327 aa)).

In the N-terminal section; belongs to the CobB/CobQ family. The protein in the C-terminal section; belongs to the phosphate acetyltransferase and butyryltransferase family.

Its subcellular location is the cytoplasm. It carries out the reaction acetyl-CoA + phosphate = acetyl phosphate + CoA. The protein operates within metabolic intermediate biosynthesis; acetyl-CoA biosynthesis; acetyl-CoA from acetate: step 2/2. Involved in acetate metabolism. The sequence is that of Phosphate acetyltransferase (pta) from Deinococcus geothermalis (strain DSM 11300 / CIP 105573 / AG-3a).